The following is a 413-amino-acid chain: Serine/threonine transporter SstT (413 aa).

Helical transmembrane passes span 21–41 (IGLL…SALG), 61–81 (SVAP…KKVG), 89–109 (IIYL…FASF), 146–166 (ITAL…GLGI), 189–209 (IVHF…ASTL), 224–244 (LAVL…IIVF), 305–325 (MGGA…TLGI), 337–357 (LVAS…LLLI), and 363–383 (LFGI…IIGV).

This sequence belongs to the dicarboxylate/amino acid:cation symporter (DAACS) (TC 2.A.23) family.

It localises to the cell inner membrane. It catalyses the reaction L-serine(in) + Na(+)(in) = L-serine(out) + Na(+)(out). The enzyme catalyses L-threonine(in) + Na(+)(in) = L-threonine(out) + Na(+)(out). Involved in the import of serine and threonine into the cell, with the concomitant import of sodium (symport system). In Mannheimia succiniciproducens (strain KCTC 0769BP / MBEL55E), this protein is Serine/threonine transporter SstT.